Consider the following 450-residue polypeptide: Probable ECA polymerase (450 aa).

Transmembrane regions (helical) follow at residues 6–26 (FSGLFVVWLLCTLFIATLTWF), 37–57 (VFFSLLFLLTFFFGFPLTSVL), 63–83 (VGVAPPEILLQALLSAGCFYA), 118–138 (VILMGIALVSVGIFFMHNGFL), 155–175 (GVALKRFFYFFIPAMLVVYFL), 181–201 (AWLFFLVSTVAFGLLTYMIVG), 207–227 (IIIAFAIFLFIGIIRGWISLW), 228–248 (MLAAAGVLGIVGMFWLALKRY), 341–361 (LVVMGGALFIPLGAIVVGLII), 378–398 (YKAAILHSFCFGAIFNMIVLA), and 410–430 (VFFIVVFGACLMIAKLLYWLF).

The protein belongs to the WzyE family. In terms of assembly, probably part of a complex composed of WzxE, WzyE and WzzE.

It is found in the cell inner membrane. It participates in bacterial outer membrane biogenesis; enterobacterial common antigen biosynthesis. Functionally, probably involved in the polymerization of enterobacterial common antigen (ECA) trisaccharide repeat units. This is Probable ECA polymerase from Escherichia coli O7:K1 (strain IAI39 / ExPEC).